We begin with the raw amino-acid sequence, 1408 residues long: MMVDQIKLLFYNKMMDRTAIKQLISRLIAQFGITYTTNILDQLKTLGFKQATNASVSLGIDDLLEAPSKAWLIQDAERQGSIFEQHHRFGSVHAVEKLRQLIETWYATSEYLKREMIPNFRIIDPLNPVHMMSFSGARGSTSQVHQLVGMRGLMSDPQGQIIDLPIRSNLREGLSLTEYIISCYGARKGVVDTAVRTSDAGYLTRRLVEVVQHIVVRKMDCGSTRGIPFKMTQDRFKRNLYQQRLIGRVLADNVYLEMRCIAMRNQDIGNELANRLITIQKQLVYVRSPLTRKSISWVCQLCYGWSLTHQNLVELGEAVGIIAGQSIGEPGTQLTLRTFHTGGVFTGDIAEHIRIPFNGIISFAEDSVHPIRTRHGHPAWICQDNLSVSVKNKNRIHNVIIPYQSLILVQNNQYVESKQVIAEVRINQSLPKERVKKHIYSNSEGEMHWSTIVRHSPQHRQSNVYPVLKTGHIWILSGSLCNVIETSSSFYKEQDRFNIQSVFTKPEFLPYSFGRNKGEKNQLTNLHKKGQELNHLKFDSSATIKTYKFPYLTSLFYCKIRKDKTENKVILSIKPIQRRNKYYRKTPYRDFVFQTPTNGILNRGDILAIHENPEYRIHISGVIKYGTLKIDSIVENERIPNDREKTTFGSRYKVLRGGNFFFLPGEIYIVHESSAYILVSNNSIVQAGTQITPTLTSQLGGLVQIKNIQKSFEIRILPGTIHHPKRIPSISKQNNMLIPPGQSVFDNLKFDHWIYLQWITSPRKKTFALARPVIEYFVRKGSYPPILNLLKEQNTLRVKFLDYMLYEDGEEIQIKNNMSIQLVQTCLLLDWEKKSPIKAAKTSILELRINKIIKTFLQISLLNSFDFYVKGSKFKRFFNNKKSFVADSIPKTLESQLSIKHQGTIRSVSNRKTSFLVLSPSDSFQNSLSTNFQYYDSKNRYGKKKELKWNTFFDTKKVSRSLKKNYLSSIKDSEKRSLNSKVGLTSVSSFDHTRQLQGMKILGLLGYLYSIANCFLYPKGIFRNEVFFHRDSSIDDLVGFDKLPNWYFLDENRKIYSFHLRNLIGKRFFYWTRNLSNFNEIPLVNLGQFICEGARLFENQISSQSGQIIALSPEFLIIRLAKLYLATKGATIHNHYGDLLREGDTLITLTYERFKSGDIIQGLPKVEQLLEARSVNAVSRNIEDNFKKCNRVIAKFIESPWSFFFSAKISTEQSRKDLVDQIQGVYQSQGVQISDKHIEIIVRQMTSKVLTLEDGIATVFLPGELIELPRAQRMNRALKQLIYYKPILLGITKASLNTTSFLSEASFQETTRVLARAAIRGRIDWLKGLKENVIIGGIVPTGTGSREVTCQMDLEKHKKGSNLKIKNTHSFSCEIKDLLFNHGKVSLTFKRSNIHRELKKPLSENDSD.

Belongs to the RNA polymerase beta' chain family. RpoC2 subfamily. In plastids the minimal PEP RNA polymerase catalytic core is composed of four subunits: alpha, beta, beta', and beta''. When a (nuclear-encoded) sigma factor is associated with the core the holoenzyme is formed, which can initiate transcription.

The protein localises to the plastid. It is found in the chloroplast. The enzyme catalyses RNA(n) + a ribonucleoside 5'-triphosphate = RNA(n+1) + diphosphate. In terms of biological role, DNA-dependent RNA polymerase catalyzes the transcription of DNA into RNA using the four ribonucleoside triphosphates as substrates. The polypeptide is DNA-directed RNA polymerase subunit beta'' (Psilotum nudum (Whisk fern)).